A 24-amino-acid chain; its full sequence is Defensin D5 (24 aa).

This sequence belongs to the DEFL family. Group IV subfamily. As to expression, distributed in the epidermal cell layer of leaves and in the subepidermal layer region of stems. Not in roots.

It localises to the secreted. The protein resides in the cell wall. In terms of biological role, antimicrobial peptide. Active against Fusarium spp., Gram-positive and Gram-negative bacterial pathogens. The chain is Defensin D5 from Spinacia oleracea (Spinach).